Reading from the N-terminus, the 492-residue chain is Catalase (492 aa).

Catalysis depends on residues histidine 65 and asparagine 138. Position 348 (tyrosine 348) interacts with heme.

This sequence belongs to the catalase family. As to quaternary structure, homotetramer. Requires heme as cofactor. As to expression, in stems, leaves, roots and developing fruits.

It is found in the cytoplasm. It localises to the cytosol. The protein resides in the peroxisome matrix. It carries out the reaction 2 H2O2 = O2 + 2 H2O. Catalyzes the degradation of hydrogen peroxide (H(2)O(2)) generated by peroxisomal oxidases to water and oxygen, thereby protecting cells from the toxic effects of hydrogen peroxide. The polypeptide is Catalase (CAT) (Capsicum annuum (Capsicum pepper)).